The following is a 423-amino-acid chain: ER-bound oxygenase mpaB' (423 aa).

At 1 to 22 (MSLSLPPALSELARALPYSRTQ) the chain is on the lumenal side. A helical membrane pass occupies residues 23–41 (WLPILVGFLIGYPLLIKAL). Residues 42–423 (RYKRLGEMKK…ISRTGKCPFH (382 aa)) lie on the Cytoplasmic side of the membrane.

Belongs to the mpaB oxygenase family.

It is found in the endoplasmic reticulum membrane. It carries out the reaction 4-farnesyl-3,5-dihydroxy-6-methylphthalide + AH2 + 2 O2 = (4E,8E)-10-(4,6-dihydroxy-7-methyl-3-oxo-1,3-dihydro-2-benzofuran-5-yl)-4,8-dimethyldeca-4,8-dienoate + acetone + A + H2O + H(+). It participates in secondary metabolite biosynthesis; terpenoid biosynthesis. Its function is as follows. ER-bound oxygenase; part of the gene cluster that mediates the biosynthesis of mycophenolic acid (MPA), the first isolated antibiotic natural product in the world obtained from a culture of Penicillium brevicompactum in 1893. MpaB' catalyzes the oxidative cleavage the C19-C20 double bond in farnesyl-DHMP (FDHMP) to yield FDHMP-3C via a mycophenolic aldehyde intermediate. The first step of the pathway is the synthesis of 5-methylorsellinic acid (5MOA) by the cytosolic polyketide synthase mpaC. 5MOA is then converted to the phthalide compound 5,7-dihydroxy-4,6-dimethylphthalide (DHMP) by the endoplasmic reticulum-bound cytochrome P450 monooxygenase mpaDE. MpaDE first catalyzes hydroxylation of 5-MOA to 4,6-dihydroxy-2-(hydroxymethyl)-3-methylbenzoic acid (DHMB). MpaDE then acts as a lactone synthase that catalyzes the ring closure to convert DHMB into DHMP. The next step is the prenylation of DHMP by the Golgi apparatus-associated prenyltransferase mpaA to yield farnesyl-DHMP (FDHMP). The ER-bound oxygenase mpaB then mediates the oxidative cleavage the C19-C20 double bond in FDHMP to yield FDHMP-3C via a mycophenolic aldehyde intermediate. The O-methyltransferase mpaG catalyzes the methylation of FDHMP-3C to yield MFDHMP-3C. After the cytosolic methylation of FDHMP-3C, MFDHMP-3C enters into peroxisomes probably via free diffusion due to its low molecular weight. Upon a peroxisomal CoA ligation reaction, catalyzed by a beta-oxidation component enzyme acyl-CoA ligase ACL891, MFDHMP-3C-CoA would then be restricted to peroxisomes for the following beta-oxidation pathway steps. The peroxisomal beta-oxidation machinery than converts MFDHMP-3C-CoA into MPA_CoA, via a beta-oxidation chain-shortening process. Finally mpaH acts as a peroxisomal acyl-CoA hydrolase with high substrate specificity toward MPA-CoA to release the final product MPA. The polypeptide is ER-bound oxygenase mpaB' (Penicillium brevicompactum).